A 263-amino-acid polypeptide reads, in one-letter code: 4'-phosphopantetheinyl transferase pptA (263 aa).

Belongs to the P-Pant transferase superfamily.

The catalysed reaction is apo-[ACP] + CoA = holo-[ACP] + adenosine 3',5'-bisphosphate + H(+). Functionally, transfers the 4'-phosphopantetheine moiety from coenzyme A to a Ser of an acyl-carrier-protein. Activates the peptidyl carrier protein (PCP) domains of surfactin synthas. This is 4'-phosphopantetheinyl transferase pptA (pptA) from Paxillus involutus (Naked brimcap).